Here is a 585-residue protein sequence, read N- to C-terminus: ATP-dependent lipid A-core flippase (585 aa).

Transmembrane regions (helical) follow at residues Leu-24 to Ala-44, Leu-65 to Gly-85, Ile-143 to Val-163, Trp-165 to Val-185, and Pro-253 to Pro-273. The ABC transmembrane type-1 domain occupies Ala-29–Arg-310. The ABC transporter domain maps to Leu-342 to Leu-578. Gly-376 to Ser-383 contributes to the ATP binding site.

This sequence belongs to the ABC transporter superfamily. Lipid exporter (TC 3.A.1.106) family. Homodimer.

The protein resides in the cell inner membrane. It carries out the reaction ATP + H2O + lipid A-core oligosaccharideSide 1 = ADP + phosphate + lipid A-core oligosaccharideSide 2.. Functionally, involved in lipopolysaccharide (LPS) biosynthesis. Translocates lipid A-core from the inner to the outer leaflet of the inner membrane. Transmembrane domains (TMD) form a pore in the inner membrane and the ATP-binding domain (NBD) is responsible for energy generation. The sequence is that of ATP-dependent lipid A-core flippase from Hahella chejuensis (strain KCTC 2396).